The following is a 296-amino-acid chain: MTITIIAPPQADAAAPAPGNRPGVAHIDPNMKLVTGTFCSASEDWFEEPLERGLRLILVQSGQLRCRIPGQPEHLIEGPSLCTIANDGDFTSAQIYGTDKPLRYTIVQLGVEALDSRLGWLPEQLIRRPGGDPRIMSCPAPRAMQALASQIATCQMLGPTRDLYLGGKALELAALSAQFLSGEGRPVEEPRITCSEVERIHAARDLLVGALQEPPSLDTLASRVGMNPRKLTAGFRKVFGASVFGYLQEYRLREAHRMLCDEEANVSTVAYRVGYSPAHFSIAFRKRYGISPSEIR.

Residues 201–296 (HAARDLLVGA…RYGISPSEIR (96 aa)) enclose the HTH araC/xylS-type domain. 2 DNA-binding regions (H-T-H motif) span residues 218-239 (DTLA…RKVF) and 266-288 (VSTV…RKRY).

Its function is as follows. Positive activator of the genes for pyochelin and ferripyochelin receptors. This is Regulatory protein PchR (pchR) from Pseudomonas aeruginosa (strain ATCC 15692 / DSM 22644 / CIP 104116 / JCM 14847 / LMG 12228 / 1C / PRS 101 / PAO1).